Reading from the N-terminus, the 391-residue chain is Tyrosine recombinase XerC-like (391 aa).

The Core-binding (CB) domain occupies Val-64–Val-148. Residues Thr-175–Glu-384 enclose the Tyr recombinase domain. Catalysis depends on residues Arg-210, Lys-244, His-335, Arg-338, and His-361. Residue Tyr-371 is the O-(3'-phospho-DNA)-tyrosine intermediate of the active site.

This sequence belongs to the 'phage' integrase family.

It localises to the cytoplasm. Its function is as follows. Site-specific tyrosine recombinase, which acts by catalyzing the cutting and rejoining of the recombining DNA molecules. The polypeptide is Tyrosine recombinase XerC-like (Caldanaerobacter subterraneus subsp. tengcongensis (strain DSM 15242 / JCM 11007 / NBRC 100824 / MB4) (Thermoanaerobacter tengcongensis)).